A 287-amino-acid polypeptide reads, in one-letter code: Formamidopyrimidine-DNA glycosylase (287 aa).

Catalysis depends on Pro-2, which acts as the Schiff-base intermediate with DNA. Residue Glu-3 is the Proton donor of the active site. Residue Lys-58 is the Proton donor; for beta-elimination activity of the active site. His-104, Arg-123, and Arg-166 together coordinate DNA. The FPG-type zinc finger occupies 251-287 (RVYDREGEPCPTPACKGVIAREVQAGRSTFFCPVCQV). Arg-277 serves as the catalytic Proton donor; for delta-elimination activity.

The protein belongs to the FPG family. Monomer. Zn(2+) is required as a cofactor.

The enzyme catalyses Hydrolysis of DNA containing ring-opened 7-methylguanine residues, releasing 2,6-diamino-4-hydroxy-5-(N-methyl)formamidopyrimidine.. It carries out the reaction 2'-deoxyribonucleotide-(2'-deoxyribose 5'-phosphate)-2'-deoxyribonucleotide-DNA = a 3'-end 2'-deoxyribonucleotide-(2,3-dehydro-2,3-deoxyribose 5'-phosphate)-DNA + a 5'-end 5'-phospho-2'-deoxyribonucleoside-DNA + H(+). Its function is as follows. Involved in base excision repair of DNA damaged by oxidation or by mutagenic agents. Acts as a DNA glycosylase that recognizes and removes damaged bases. Has a preference for oxidized purines, such as 7,8-dihydro-8-oxoguanine (8-oxoG). Has AP (apurinic/apyrimidinic) lyase activity and introduces nicks in the DNA strand. Cleaves the DNA backbone by beta-delta elimination to generate a single-strand break at the site of the removed base with both 3'- and 5'-phosphates. The protein is Formamidopyrimidine-DNA glycosylase of Caulobacter vibrioides (strain ATCC 19089 / CIP 103742 / CB 15) (Caulobacter crescentus).